Here is a 469-residue protein sequence, read N- to C-terminus: 6-phosphofructo-2-kinase/fructose-2,6-bisphosphatase 4 (469 aa).

The 6-phosphofructo-2-kinase stretch occupies residues 1-249; the sequence is MASPRELTQN…YYLMNIHVTP (249 aa). 46–54 serves as a coordination point for ATP; the sequence is GLPARGKTY. Beta-D-fructose 6-phosphate-binding residues include Arg-79 and Arg-103. Asp-129 is an active-site residue. Beta-D-fructose 6-phosphate-binding residues include Thr-131 and Arg-137. Residue Cys-159 is part of the active site. Position 168 to 173 (168 to 173) interacts with ATP; that stretch reads NIVQVK. 3 residues coordinate beta-D-fructose 6-phosphate: Lys-173, Arg-194, and Tyr-198. The segment at 250-469 is fructose-2,6-bisphosphatase; it reads RSIYLCRHGE…EALVTVPAHQ (220 aa). Arg-256 provides a ligand contact to beta-D-fructose 2,6-bisphosphate. His-257 serves as the catalytic Tele-phosphohistidine intermediate. Positions 263, 269, and 306 each coordinate beta-D-fructose 2,6-bisphosphate. The active-site Proton donor/acceptor is the Glu-326. Beta-D-fructose 2,6-bisphosphate contacts are provided by Tyr-337, Arg-351, Lys-355, Tyr-366, Gln-392, and Arg-396. 348–351 is a binding site for ATP; sequence FALR. Residues 392 to 396 and Tyr-428 contribute to the ATP site; that span reads QAVMR. Thr-444 is subject to Phosphothreonine; by PKC.

The protein in the C-terminal section; belongs to the phosphoglycerate mutase family. In terms of assembly, homodimer.

The enzyme catalyses beta-D-fructose 2,6-bisphosphate + H2O = beta-D-fructose 6-phosphate + phosphate. It catalyses the reaction beta-D-fructose 6-phosphate + ATP = beta-D-fructose 2,6-bisphosphate + ADP + H(+). The most important regulatory mechanism of these opposing activities is by phosphorylation and dephosphorylation of the enzyme. Synthesis and degradation of fructose 2,6-bisphosphate. This chain is 6-phosphofructo-2-kinase/fructose-2,6-bisphosphatase 4 (PFKFB4), found in Macaca fascicularis (Crab-eating macaque).